We begin with the raw amino-acid sequence, 341 residues long: Holliday junction branch migration complex subunit RuvB (341 aa).

Residues threonine 4–tyrosine 185 form a large ATPase domain (RuvB-L) region. Residues leucine 24, arginine 25, glycine 66, lysine 69, threonine 70, threonine 71, glutamate 132 to phenylalanine 134, arginine 175, tyrosine 185, and arginine 222 contribute to the ATP site. Residue threonine 70 coordinates Mg(2+). The small ATPAse domain (RuvB-S) stretch occupies residues serine 186 to aspartate 256. Residues arginine 259–phenylalanine 341 are head domain (RuvB-H). DNA contacts are provided by arginine 295, arginine 314, and arginine 319.

The protein belongs to the RuvB family. Homohexamer. Forms an RuvA(8)-RuvB(12)-Holliday junction (HJ) complex. HJ DNA is sandwiched between 2 RuvA tetramers; dsDNA enters through RuvA and exits via RuvB. An RuvB hexamer assembles on each DNA strand where it exits the tetramer. Each RuvB hexamer is contacted by two RuvA subunits (via domain III) on 2 adjacent RuvB subunits; this complex drives branch migration. In the full resolvosome a probable DNA-RuvA(4)-RuvB(12)-RuvC(2) complex forms which resolves the HJ.

It is found in the cytoplasm. It catalyses the reaction ATP + H2O = ADP + phosphate + H(+). The RuvA-RuvB-RuvC complex processes Holliday junction (HJ) DNA during genetic recombination and DNA repair, while the RuvA-RuvB complex plays an important role in the rescue of blocked DNA replication forks via replication fork reversal (RFR). RuvA specifically binds to HJ cruciform DNA, conferring on it an open structure. The RuvB hexamer acts as an ATP-dependent pump, pulling dsDNA into and through the RuvAB complex. RuvB forms 2 homohexamers on either side of HJ DNA bound by 1 or 2 RuvA tetramers; 4 subunits per hexamer contact DNA at a time. Coordinated motions by a converter formed by DNA-disengaged RuvB subunits stimulates ATP hydrolysis and nucleotide exchange. Immobilization of the converter enables RuvB to convert the ATP-contained energy into a lever motion, pulling 2 nucleotides of DNA out of the RuvA tetramer per ATP hydrolyzed, thus driving DNA branch migration. The RuvB motors rotate together with the DNA substrate, which together with the progressing nucleotide cycle form the mechanistic basis for DNA recombination by continuous HJ branch migration. Branch migration allows RuvC to scan DNA until it finds its consensus sequence, where it cleaves and resolves cruciform DNA. This chain is Holliday junction branch migration complex subunit RuvB, found in Thiobacillus denitrificans (strain ATCC 25259 / T1).